A 455-amino-acid chain; its full sequence is Ribulose bisphosphate carboxylase large chain (455 aa).

K5 carries the post-translational modification N6,N6,N6-trimethyllysine. Substrate contacts are provided by N114 and T164. The Proton acceptor role is filled by K166. K168 serves as a coordination point for substrate. Positions 192, 194, and 195 each coordinate Mg(2+). Position 192 is an N6-carboxylysine (K192). H285 functions as the Proton acceptor in the catalytic mechanism. Substrate contacts are provided by R286, H318, and S370.

It belongs to the RuBisCO large chain family. Type I subfamily. In terms of assembly, heterohexadecamer of 8 large chains and 8 small chains; disulfide-linked. The disulfide link is formed within the large subunit homodimers. Mg(2+) serves as cofactor. Post-translationally, the disulfide bond which can form in the large chain dimeric partners within the hexadecamer appears to be associated with oxidative stress and protein turnover.

It localises to the plastid. Its subcellular location is the chloroplast. The catalysed reaction is 2 (2R)-3-phosphoglycerate + 2 H(+) = D-ribulose 1,5-bisphosphate + CO2 + H2O. It catalyses the reaction D-ribulose 1,5-bisphosphate + O2 = 2-phosphoglycolate + (2R)-3-phosphoglycerate + 2 H(+). In terms of biological role, ruBisCO catalyzes two reactions: the carboxylation of D-ribulose 1,5-bisphosphate, the primary event in carbon dioxide fixation, as well as the oxidative fragmentation of the pentose substrate in the photorespiration process. Both reactions occur simultaneously and in competition at the same active site. The sequence is that of Ribulose bisphosphate carboxylase large chain from Senna didymobotrya (Popcorn cassia).